The following is a 314-amino-acid chain: Ribosomal RNA small subunit methyltransferase H (314 aa).

S-adenosyl-L-methionine contacts are provided by residues 37–39, aspartate 57, phenylalanine 83, aspartate 105, and glutamine 112; that span reads GGH.

This sequence belongs to the methyltransferase superfamily. RsmH family.

It localises to the cytoplasm. The catalysed reaction is cytidine(1402) in 16S rRNA + S-adenosyl-L-methionine = N(4)-methylcytidine(1402) in 16S rRNA + S-adenosyl-L-homocysteine + H(+). Its function is as follows. Specifically methylates the N4 position of cytidine in position 1402 (C1402) of 16S rRNA. The protein is Ribosomal RNA small subunit methyltransferase H of Thioalkalivibrio sulfidiphilus (strain HL-EbGR7).